An 86-amino-acid polypeptide reads, in one-letter code: Protein K3 homolog (86 aa).

Residues 15–86 enclose the S1 motif domain; the sequence is NINDITQGII…LKGYIDVSIV (72 aa).

Belongs to the poxviridae K3 protein family. Interacts with host PKR kinase.

Functionally, viral mimic of eIF-2-alpha that acts as a pseudosubstrate for EIF2AK2/PKR kinase. Inhibits therefore eIF-2-alpha phosphorylation by host EIF2AK2/PKR kinase and prevents protein synthesis shutoff. This is Protein K3 homolog from Sus scrofa (Pig).